The following is a 377-amino-acid chain: Nitric oxide reductase FlRd-NAD(+) reductase (377 aa).

It belongs to the FAD-dependent oxidoreductase family. Requires FAD as cofactor.

It is found in the cytoplasm. The catalysed reaction is 2 reduced [nitric oxide reductase rubredoxin domain] + NAD(+) + H(+) = 2 oxidized [nitric oxide reductase rubredoxin domain] + NADH. The protein operates within nitrogen metabolism; nitric oxide reduction. One of at least two accessory proteins for anaerobic nitric oxide (NO) reductase. Reduces the rubredoxin moiety of NO reductase. The polypeptide is Nitric oxide reductase FlRd-NAD(+) reductase (Escherichia coli O17:K52:H18 (strain UMN026 / ExPEC)).